The following is a 922-amino-acid chain: Band 3 anion transport protein (922 aa).

Disordered stretches follow at residues 1–36 (MEGP…TMSN) and 355–389 (QHPD…LRTR). The Cytoplasmic segment spans residues 1-416 (MEGPGQDTED…LSDIRDALNP (416 aa)). Basic and acidic residues predominate over residues 10–26 (DALRRSLDPEGYEDTKG). The span at 27-36 (SRTSLGTMSN) shows a compositional bias: polar residues. The chain crosses the membrane as a helical span at residues 417-440 (QCLAAVIFIYFAALSPAITFGGLL). Over 441-448 (GEKTRGMM) the chain is Extracellular. A helical transmembrane segment spans residues 449–469 (GVSELLLSTSVQCLLFSLLSA). Topologically, residues 470-472 (QPL) are cytoplasmic. The discontinuously helical transmembrane segment at 473–489 (LVVGFSGPLLVFEEAFF) threads the bilayer. Residues 490–498 (RFCEDHGLE) are Extracellular-facing. A helical membrane pass occupies residues 499–519 (YIVGRVWIGFWLILLVLLVVA). Residues 520–531 (CEGTVLVRYLSR) are Cytoplasmic-facing. Residues 532–554 (YTQEIFSFLISLIFIYETFAKLV) traverse the membrane as a helical segment. The Extracellular portion of the chain corresponds to 555 to 581 (TIFEAHPLQQSYDTDVSTEPSVPKPNT). A helical transmembrane segment spans residues 582–602 (ALLSLVLMAGTFFLALFLRQF). The Cytoplasmic portion of the chain corresponds to 603 to 613 (KNSVFLPGKVR). A helical membrane pass occupies residues 614–634 (RLIGDFGVPISIFVMALADFF). Residues 635 to 674 (IKDTYTQKLKVPRGLEVTNGTARGWFIHPMGSATPFPIWM) lie on the Extracellular side of the membrane. A glycan (N-linked (GlcNAc...) asparagine) is linked at Asn653. Residues 675–695 (MFASPVPALLVFILIFLETQI) form a helical membrane-spanning segment. At 696–711 (TTLIVSKPERKLVKGS) the chain is on the cytoplasmic side. The chain crosses the membrane as a helical span at residues 712–730 (GFHLDLLLIVAMGGLAALF). The discontinuously helical transmembrane segment at 731–748 (GMPWLSATTVRTITHANA) threads the bilayer. Residues 749–771 (LTVVGKSAVPGERAHIVEVKEQR) are Cytoplasmic-facing. Transmembrane regions (helical) follow at residues 772-792 (LSGL…PILK) and 793-811 (YIPL…VTSL). Over 812-849 (FGIQLFDRILLLLMPPKYHPKEPYVTRVKTWRITSSPL) the chain is Cytoplasmic. An intramembrane region (discontinuously helical) is located at residues 850–880 (TQILVVALLWGVKVSPASLRCPFVLVLTVPL). Topologically, residues 881–922 (RRLLLPRIFSEIELKCLDTDDAVVTFEEAEGQDVYNEVQMPS) are cytoplasmic.

Belongs to the anion exchanger (TC 2.A.31) family. As to quaternary structure, a dimer in solution, it spans the membrane asymmetrically and appears to be tetrameric. As to expression, erythrocytes.

It localises to the cell membrane. The protein localises to the basolateral cell membrane. The enzyme catalyses hydrogencarbonate(in) + chloride(out) = hydrogencarbonate(out) + chloride(in). In terms of biological role, functions both as a transporter that mediates electroneutral anion exchange across the cell membrane and as a structural protein. Major integral membrane glycoprotein of the erythrocyte membrane; required for normal flexibility and stability of the erythrocyte membrane and for normal erythrocyte shape via the interactions of its cytoplasmic domain with cytoskeletal proteins, glycolytic enzymes, and hemoglobin. Functions as a transporter that mediates the 1:1 exchange of inorganic anions across the erythrocyte membrane. Mediates chloride-bicarbonate exchange in the kidney, and is required for normal acidification of the urine. The polypeptide is Band 3 anion transport protein (SLC4A1) (Gallus gallus (Chicken)).